A 442-amino-acid chain; its full sequence is Ankyrin repeat and MYND domain-containing protein 2 (442 aa).

ANK repeat units lie at residues 45-74 (NGMT…DVNC), 79-108 (HGYT…ETDV), and 159-188 (KLAG…NPLL). Positions 320, 323, 332, 335, 341, 345, 353, and 357 each coordinate Zn(2+). Residues 320 to 357 (CTTCGEKGASKRCSVCKMVIYCDQTCQKTHWFAHKKIC) form an MYND-type zinc finger. The span at 401–421 (TRICQKNDNPKDSEEGEKESL) shows a compositional bias: basic and acidic residues. The disordered stretch occupies residues 401 to 442 (TRICQKNDNPKDSEEGEKESLQSDAGLEGLQEAAVGPQVSEE).

As to quaternary structure, interacts with the retinal-specific guanylyl cyclase GC1.

The protein localises to the cell projection. Its subcellular location is the cilium. In terms of biological role, may be involved in the trafficking of signaling proteins to the cilia. This Bos taurus (Bovine) protein is Ankyrin repeat and MYND domain-containing protein 2 (ANKMY2).